A 481-amino-acid polypeptide reads, in one-letter code: UDP-glycosyltransferase 72E2 (481 aa).

The active-site Proton acceptor is His-18. His-18 serves as a coordination point for an anthocyanidin. Catalysis depends on Asp-111, which acts as the Charge relay. Positions 346, 348, 363, 366, 368, and 371 each coordinate UDP-alpha-D-glucose. An anthocyanidin is bound at residue Ala-386. UDP-alpha-D-glucose-binding residues include Glu-387 and Gln-388.

Belongs to the UDP-glycosyltransferase family. As to expression, expressed in seedlings and roots.

The enzyme catalyses (E)-4-coumarate + UDP-alpha-D-glucose = 4-O-(beta-D-glucosyl)-trans-4-coumarate + UDP + H(+). The catalysed reaction is (E)-coniferol + UDP-alpha-D-glucose = 4-O-(beta-D-glucosyl)-(E)-coniferol + UDP + H(+). It carries out the reaction (E)-sinapyl alcohol + UDP-alpha-D-glucose = 4-O-(beta-D-glucosyl)-trans-4-sinapoyl alcohol + UDP + H(+). It catalyses the reaction (E)-sinapate + UDP-alpha-D-glucose = 4-O-(beta-D-glucosyl)-trans-sinapate + UDP + H(+). The enzyme catalyses (E)-coniferaldehyde + UDP-alpha-D-glucose = 4-O-(beta-D-glucosyl)-4-(E)-coniferyl aldehyde + UDP + H(+). The catalysed reaction is (E)-sinapaldehyde + UDP-alpha-D-glucose = 4-O-(beta-D-glucosyl)-4-trans-sinapoyl aldehyde + UDP + H(+). In terms of biological role, involved in the O-glucosylation of monolignols (alcohol monomers of lignin). Glucosylates coniferyl alcohol to form coniferyl alcohol 4-O-glucoside. Glucosylates sinapyl alcohol to form sinapyl alcohol 4-O-glucoside. Glucosylates coniferyl aldehyde to form coniferyl aldehyde 4-O-glucoside. Glucosylates sinapyl aldehyde to form sinapyl aldehyde 4-O-glucoside. Possesses low activity with sinapate and ferulate as substrates. The sequence is that of UDP-glycosyltransferase 72E2 from Arabidopsis thaliana (Mouse-ear cress).